A 33-amino-acid polypeptide reads, in one-letter code: Mu/omega-theraphotoxin-Tap2a (33 aa).

3 disulfide bridges follow: Cys-2-Cys-17, Cys-9-Cys-22, and Cys-16-Cys-29.

It belongs to the neurotoxin 10 (Hwtx-1) family. 59 (Tltx) subfamily. In terms of tissue distribution, expressed by the venom gland.

Its subcellular location is the secreted. Its function is as follows. Gating-modifier toxin that inhibits both sodium (Nav) and calcium (Cav3) channels by inducing hyperpolarizing shift in voltage-dependence of activation and steady state inactivation. Inhibits Nav1.1/SCN1A, Nav1.2/SCN2A, Nav1.6/SCN6A, Nav1.7/SCN9A and Cav3.1/CACNA1G sodium and calcium channels at nanomolar concentrations (IC(50)=169-621 nM). Surprisingly, selectively slows fast inactivation of Nav1.3/SCN3A. Also shows moderate inhibition of Nav1.3/SCN3A sodium channels (IC(50)=1216 nM). In Theraphosa apophysis (Goliath pinkfoot tarantula), this protein is Mu/omega-theraphotoxin-Tap2a.